A 112-amino-acid chain; its full sequence is Putative transposase YkgN (112 aa).

Belongs to the transposase 8 family.

The polypeptide is Putative transposase YkgN (ykgN) (Escherichia coli (strain K12)).